We begin with the raw amino-acid sequence, 336 residues long: Holliday junction branch migration complex subunit RuvB (336 aa).

The interval M1–Y182 is large ATPase domain (RuvB-L). Residues L21, R22, G63, K66, T67, S68, E129–F131, R172, Y182, and R219 each bind ATP. T67 serves as a coordination point for Mg(2+). Positions S183–G253 are small ATPAse domain (RuvB-S). The interval E256–F336 is head domain (RuvB-H). Positions 310 and 315 each coordinate DNA.

It belongs to the RuvB family. Homohexamer. Forms an RuvA(8)-RuvB(12)-Holliday junction (HJ) complex. HJ DNA is sandwiched between 2 RuvA tetramers; dsDNA enters through RuvA and exits via RuvB. An RuvB hexamer assembles on each DNA strand where it exits the tetramer. Each RuvB hexamer is contacted by two RuvA subunits (via domain III) on 2 adjacent RuvB subunits; this complex drives branch migration. In the full resolvosome a probable DNA-RuvA(4)-RuvB(12)-RuvC(2) complex forms which resolves the HJ.

Its subcellular location is the cytoplasm. The catalysed reaction is ATP + H2O = ADP + phosphate + H(+). In terms of biological role, the RuvA-RuvB-RuvC complex processes Holliday junction (HJ) DNA during genetic recombination and DNA repair, while the RuvA-RuvB complex plays an important role in the rescue of blocked DNA replication forks via replication fork reversal (RFR). RuvA specifically binds to HJ cruciform DNA, conferring on it an open structure. The RuvB hexamer acts as an ATP-dependent pump, pulling dsDNA into and through the RuvAB complex. RuvB forms 2 homohexamers on either side of HJ DNA bound by 1 or 2 RuvA tetramers; 4 subunits per hexamer contact DNA at a time. Coordinated motions by a converter formed by DNA-disengaged RuvB subunits stimulates ATP hydrolysis and nucleotide exchange. Immobilization of the converter enables RuvB to convert the ATP-contained energy into a lever motion, pulling 2 nucleotides of DNA out of the RuvA tetramer per ATP hydrolyzed, thus driving DNA branch migration. The RuvB motors rotate together with the DNA substrate, which together with the progressing nucleotide cycle form the mechanistic basis for DNA recombination by continuous HJ branch migration. Branch migration allows RuvC to scan DNA until it finds its consensus sequence, where it cleaves and resolves cruciform DNA. The polypeptide is Holliday junction branch migration complex subunit RuvB (Helicobacter pylori (strain G27)).